The following is a 113-amino-acid chain: Flagellar hook-basal body complex protein FliE (113 aa).

This sequence belongs to the FliE family.

It is found in the bacterial flagellum basal body. The sequence is that of Flagellar hook-basal body complex protein FliE from Rhizobium leguminosarum bv. trifolii (strain WSM2304).